A 114-amino-acid chain; its full sequence is Iron-sulfur cluster insertion protein ErpA (114 aa).

Iron-sulfur cluster-binding residues include cysteine 42, cysteine 106, and cysteine 108.

Belongs to the HesB/IscA family. As to quaternary structure, homodimer. Requires iron-sulfur cluster as cofactor.

Required for insertion of 4Fe-4S clusters for at least IspG. The polypeptide is Iron-sulfur cluster insertion protein ErpA (Sodalis glossinidius (strain morsitans)).